A 423-amino-acid chain; its full sequence is Imidazolonepropionase (423 aa).

2 residues coordinate Fe(3+): His78 and His80. Residues His78 and His80 each contribute to the Zn(2+) site. 3 residues coordinate 4-imidazolone-5-propanoate: Arg87, Tyr150, and His183. Position 150 (Tyr150) interacts with N-formimidoyl-L-glutamate. His247 contributes to the Fe(3+) binding site. His247 serves as a coordination point for Zn(2+). Glu250 contributes to the 4-imidazolone-5-propanoate binding site. Asp322 is a binding site for Fe(3+). Residue Asp322 participates in Zn(2+) binding. Positions 324 and 326 each coordinate N-formimidoyl-L-glutamate. Ser327 provides a ligand contact to 4-imidazolone-5-propanoate.

This sequence belongs to the metallo-dependent hydrolases superfamily. HutI family. Zn(2+) is required as a cofactor. It depends on Fe(3+) as a cofactor.

It localises to the cytoplasm. It catalyses the reaction 4-imidazolone-5-propanoate + H2O = N-formimidoyl-L-glutamate. It functions in the pathway amino-acid degradation; L-histidine degradation into L-glutamate; N-formimidoyl-L-glutamate from L-histidine: step 3/3. Functionally, catalyzes the hydrolytic cleavage of the carbon-nitrogen bond in imidazolone-5-propanoate to yield N-formimidoyl-L-glutamate. It is the third step in the universal histidine degradation pathway. This is Imidazolonepropionase from Bacillus cereus (strain ATCC 14579 / DSM 31 / CCUG 7414 / JCM 2152 / NBRC 15305 / NCIMB 9373 / NCTC 2599 / NRRL B-3711).